The chain runs to 126 residues: MNRTMLQGKLHRVKVTQADLNYEGSCAIDQDFLDASGILQYEAVDIYNVNNGQRFSTYAIAAERGSKIISVNGAAARCACEGDLLIICSYVQMSDEQAREWQPKVAYFEGDNQMKRVAKAVPVQVA.

Ser-25 (schiff-base intermediate with substrate; via pyruvic acid) is an active-site residue. Ser-25 carries the post-translational modification Pyruvic acid (Ser). Thr-57 contributes to the substrate binding site. The active-site Proton donor is the Tyr-58. Substrate is bound at residue Gly-73–Ala-75.

The protein belongs to the PanD family. Heterooctamer of four alpha and four beta subunits. Pyruvate is required as a cofactor. Post-translationally, is synthesized initially as an inactive proenzyme, which is activated by self-cleavage at a specific serine bond to produce a beta-subunit with a hydroxyl group at its C-terminus and an alpha-subunit with a pyruvoyl group at its N-terminus.

Its subcellular location is the cytoplasm. It catalyses the reaction L-aspartate + H(+) = beta-alanine + CO2. It functions in the pathway cofactor biosynthesis; (R)-pantothenate biosynthesis; beta-alanine from L-aspartate: step 1/1. Its function is as follows. Catalyzes the pyruvoyl-dependent decarboxylation of aspartate to produce beta-alanine. This chain is Aspartate 1-decarboxylase, found in Erwinia tasmaniensis (strain DSM 17950 / CFBP 7177 / CIP 109463 / NCPPB 4357 / Et1/99).